The primary structure comprises 632 residues: Probable extracellular metalloproteinase 2 (632 aa).

The N-terminal stretch at Met-1 to Gly-19 is a signal peptide. A propeptide spanning residues Leu-20–Ser-244 is cleaved from the precursor. N-linked (GlcNAc...) asparagine glycans are attached at residues Asn-81 and Asn-270. His-429 contacts Zn(2+). Glu-430 is an active-site residue. His-433 lines the Zn(2+) pocket.

The protein belongs to the peptidase M36 family. Zn(2+) is required as a cofactor.

The protein resides in the secreted. In terms of biological role, secreted metalloproteinase probably acting as a virulence factor. This Arthroderma benhamiae (strain ATCC MYA-4681 / CBS 112371) (Trichophyton mentagrophytes) protein is Probable extracellular metalloproteinase 2 (MEP2).